The primary structure comprises 26 residues: Thrombopoietin (26 aa).

Belongs to the EPO/TPO family.

The protein resides in the secreted. Functionally, lineage-specific cytokine affecting the proliferation and maturation of megakaryocytes from their committed progenitor cells. It acts at a late stage of megakaryocyte development. It may be the major physiological regulator of circulating platelets. The polypeptide is Thrombopoietin (THPO) (Sus scrofa (Pig)).